The chain runs to 150 residues: Deoxyuridine 5'-triphosphate nucleotidohydrolase (150 aa).

Residues R70–G72, N82, L86–D88, and M96 contribute to the substrate site.

The protein belongs to the dUTPase family. Mg(2+) serves as cofactor.

The enzyme catalyses dUTP + H2O = dUMP + diphosphate + H(+). It functions in the pathway pyrimidine metabolism; dUMP biosynthesis; dUMP from dCTP (dUTP route): step 2/2. This enzyme is involved in nucleotide metabolism: it produces dUMP, the immediate precursor of thymidine nucleotides and it decreases the intracellular concentration of dUTP so that uracil cannot be incorporated into DNA. The polypeptide is Deoxyuridine 5'-triphosphate nucleotidohydrolase (Baumannia cicadellinicola subsp. Homalodisca coagulata).